The chain runs to 288 residues: Polyamine aminopropyltransferase (288 aa).

The 230-residue stretch at 9–238 (ETLHDQFGQY…GIMTFAWATD (230 aa)) folds into the PABS domain. Glutamine 33 is a binding site for S-methyl-5'-thioadenosine. Spermidine is bound by residues histidine 64 and aspartate 88. S-methyl-5'-thioadenosine is bound by residues glutamate 108 and 140–141 (DG). Aspartate 158 acts as the Proton acceptor in catalysis. 158-161 (DCTD) contributes to the spermidine binding site. Proline 165 contacts S-methyl-5'-thioadenosine.

It belongs to the spermidine/spermine synthase family. In terms of assembly, homodimer or homotetramer.

It localises to the cytoplasm. The enzyme catalyses S-adenosyl 3-(methylsulfanyl)propylamine + putrescine = S-methyl-5'-thioadenosine + spermidine + H(+). The protein operates within amine and polyamine biosynthesis; spermidine biosynthesis; spermidine from putrescine: step 1/1. Its function is as follows. Catalyzes the irreversible transfer of a propylamine group from the amino donor S-adenosylmethioninamine (decarboxy-AdoMet) to putrescine (1,4-diaminobutane) to yield spermidine. This Escherichia coli (strain ATCC 8739 / DSM 1576 / NBRC 3972 / NCIMB 8545 / WDCM 00012 / Crooks) protein is Polyamine aminopropyltransferase.